Reading from the N-terminus, the 737-residue chain is Transcription activator MSS11 (737 aa).

The interval 1 to 23 (MDNTTNINTNERSSNTDFSSAPN) is disordered. Positions 51–83 (SKQLLYAHIYNYLIKNNYWNSAAKFLSEADLPL) constitute a LisH domain. 4 disordered regions span residues 191 to 220 (TQNS…TNRN), 268 to 347 (LQSP…PTNQ), 413 to 439 (GNQN…NANG), and 572 to 660 (KTNT…TKES). A compositionally biased stretch (polar residues) spans 207 to 220 (DGSNFNLNDPTNRN). A compositionally biased stretch (low complexity) spans 269–314 (QSPAQPQQSSQQQIQQPQRQPQHQQQQQQQQQQQQQQQQQQQQQQQ). Polar residues-rich tracts occupy residues 330-347 (SENS…PTNQ), 421-439 (TRNN…NANG), and 572-585 (KTNT…STSV). Positions 590–643 (NNNNNNNNNNNNNNNSNNSNNNNNNNNSNNTPTVSQPSSKRTSSSSTTPNITTT) are enriched in low complexity. Basic residues predominate over residues 646 to 655 (PKRKQRVGKT).

This sequence belongs to the MSS11 family. In terms of assembly, interacts with FLO8, STE12 and TEC1.

The protein resides in the cytoplasm. It localises to the nucleus. Its function is as follows. Transcription factor that regulates pseudohyphal differentiation, invasive growth, floculation, adhesion and starch metabolism in response to nutrient availability. This chain is Transcription activator MSS11 (MSS11), found in Saccharomyces cerevisiae (strain YJM789) (Baker's yeast).